We begin with the raw amino-acid sequence, 393 residues long: NAD(P)H-quinone oxidoreductase subunit H, chloroplastic (393 aa).

Belongs to the complex I 49 kDa subunit family. As to quaternary structure, NDH is composed of at least 16 different subunits, 5 of which are encoded in the nucleus.

It localises to the plastid. Its subcellular location is the chloroplast thylakoid membrane. It catalyses the reaction a plastoquinone + NADH + (n+1) H(+)(in) = a plastoquinol + NAD(+) + n H(+)(out). It carries out the reaction a plastoquinone + NADPH + (n+1) H(+)(in) = a plastoquinol + NADP(+) + n H(+)(out). Functionally, NDH shuttles electrons from NAD(P)H:plastoquinone, via FMN and iron-sulfur (Fe-S) centers, to quinones in the photosynthetic chain and possibly in a chloroplast respiratory chain. The immediate electron acceptor for the enzyme in this species is believed to be plastoquinone. Couples the redox reaction to proton translocation, and thus conserves the redox energy in a proton gradient. This is NAD(P)H-quinone oxidoreductase subunit H, chloroplastic from Gossypium barbadense (Sea Island cotton).